The following is an 802-amino-acid chain: ATP-dependent zinc metalloprotease FTSH 3, mitochondrial (802 aa).

A mitochondrion-targeting transit peptide spans 1-21 (MSLSSLSRALARSARSSRQRQ). Residues 1–23 (MSLSSLSRALARSARSSRQRQGS) show a composition bias toward low complexity. Disordered regions lie at residues 1-33 (MSLS…GLRA) and 85-120 (DKSK…SGDQ). A compositionally biased stretch (basic and acidic residues) spans 85–113 (DKSKKNHGKHSEEENKGKGDESDKSDSKK). Residues 133 to 153 (MIAPLFLFGLLLLSASASSSE) form a helical membrane-spanning segment. Position 360-367 (360-367 (GPPGTGKT)) interacts with ATP. His-585 is a binding site for Zn(2+). The active site involves Glu-586. Positions 589 and 661 each coordinate Zn(2+). The disordered stretch occupies residues 773–802 (KQGFQDEDSNRNAELSNADGASSLGEAVAS).

This sequence in the N-terminal section; belongs to the AAA ATPase family. The protein in the C-terminal section; belongs to the peptidase M41 family. Zn(2+) serves as cofactor.

The protein resides in the mitochondrion inner membrane. In terms of biological role, probable ATP-dependent zinc metallopeptidase. This chain is ATP-dependent zinc metalloprotease FTSH 3, mitochondrial (FTSH3), found in Oryza sativa subsp. japonica (Rice).